We begin with the raw amino-acid sequence, 93 residues long: Defensin alpha 4 (93 aa).

A signal peptide spans 1 to 19 (MRTLTLLITLLLLALHTQA). A propeptide spanning residues 20–62 (ESPQERAKAAPDQDMVMEDQDIFISFGGYKGTVLQDAVVKAGQ) is cleaved from the precursor. 3 disulfide bridges follow: Cys-64-Cys-92, Cys-66-Cys-81, and Cys-71-Cys-91.

It belongs to the alpha-defensin family. In terms of tissue distribution, expressed in neutrophils (at protein level). Highest expression in bone marrow and to a much lesser extent in small intestine.

It localises to the secreted. Its function is as follows. Host-defense peptide that has antimicrobial activity against Gram-positive and Gram-negative bacteria and fungi (in vitro). Exhibits activity against E.coli, A.calcoaceticus, S,aureus and C.albicans. The sequence is that of Defensin alpha 4 from Rattus norvegicus (Rat).